The following is a 1072-amino-acid chain: Integrator complex subunit 3 homolog (1072 aa).

Disordered regions lie at residues 920-943 and 1002-1072; these read YPSS…STPS and DTTV…NDSD. Residues Ser1042, Ser1043, Ser1047, and Ser1048 each carry the phosphoserine modification.

Belongs to the Integrator subunit 3 family. In terms of assembly, belongs to the multiprotein complex Integrator, at least composed of IntS1, IntS2, IntS3, IntS4, omd/IntS5, IntS6, defl/IntS7, IntS8, IntS9, IntS10, IntS11, IntS12, asun/IntS13, IntS14 and IntS15. The core complex associates with protein phosphatase 2A subunits mts/PP2A and Pp2A-29B, to form the Integrator-PP2A (INTAC) complex.

The protein resides in the nucleus. Its subcellular location is the cytoplasm. Functionally, component of the integrator complex, a multiprotein complex that terminates RNA polymerase II (Pol II) transcription in the promoter-proximal region of genes. The integrator complex provides a quality checkpoint during transcription elongation by driving premature transcription termination of transcripts that are unfavorably configured for transcriptional elongation: the complex terminates transcription by (1) catalyzing dephosphorylation of the C-terminal domain (CTD) of Pol II subunit Polr2A/Rbp1 and Spt5, and (2) degrading the exiting nascent RNA transcript via endonuclease activity. The integrator complex is also involved in the 3'-end processing of the U7 snRNA, and also the spliceosomal snRNAs U1, U2, U4 and U5. This is Integrator complex subunit 3 homolog (IntS3) from Drosophila yakuba (Fruit fly).